Here is a 474-residue protein sequence, read N- to C-terminus: Bifunctional protein HldE (474 aa).

The ribokinase stretch occupies residues 1-318; the sequence is MKLSMPRFDQ…RAVQREQGSE (318 aa). Residue 194 to 197 coordinates ATP; it reads NLSE. Asp263 is a catalytic residue. A cytidylyltransferase region spans residues 343-474; the sequence is FTNGCFDILH…AIVEKIRQKG (132 aa).

This sequence in the N-terminal section; belongs to the carbohydrate kinase PfkB family. In the C-terminal section; belongs to the cytidylyltransferase family. Homodimer.

The enzyme catalyses D-glycero-beta-D-manno-heptose 7-phosphate + ATP = D-glycero-beta-D-manno-heptose 1,7-bisphosphate + ADP + H(+). The catalysed reaction is D-glycero-beta-D-manno-heptose 1-phosphate + ATP + H(+) = ADP-D-glycero-beta-D-manno-heptose + diphosphate. Its pathway is nucleotide-sugar biosynthesis; ADP-L-glycero-beta-D-manno-heptose biosynthesis; ADP-L-glycero-beta-D-manno-heptose from D-glycero-beta-D-manno-heptose 7-phosphate: step 1/4. It participates in nucleotide-sugar biosynthesis; ADP-L-glycero-beta-D-manno-heptose biosynthesis; ADP-L-glycero-beta-D-manno-heptose from D-glycero-beta-D-manno-heptose 7-phosphate: step 3/4. It functions in the pathway bacterial outer membrane biogenesis; LPS core biosynthesis. Functionally, catalyzes the phosphorylation of D-glycero-D-manno-heptose 7-phosphate at the C-1 position to selectively form D-glycero-beta-D-manno-heptose-1,7-bisphosphate. Catalyzes the ADP transfer from ATP to D-glycero-beta-D-manno-heptose 1-phosphate, yielding ADP-D-glycero-beta-D-manno-heptose. This chain is Bifunctional protein HldE, found in Pseudomonas aeruginosa (strain ATCC 15692 / DSM 22644 / CIP 104116 / JCM 14847 / LMG 12228 / 1C / PRS 101 / PAO1).